A 155-amino-acid polypeptide reads, in one-letter code: 6,7-dimethyl-8-ribityllumazine synthase (155 aa).

5-amino-6-(D-ribitylamino)uracil contacts are provided by residues F24, 58–60, and 82–84; these read AFE and VII. (2S)-2-hydroxy-3-oxobutyl phosphate is bound at residue 87–88; that stretch reads ST. H90 (proton donor) is an active-site residue. F115 contacts 5-amino-6-(D-ribitylamino)uracil. Residue R129 participates in (2S)-2-hydroxy-3-oxobutyl phosphate binding.

It belongs to the DMRL synthase family.

The enzyme catalyses (2S)-2-hydroxy-3-oxobutyl phosphate + 5-amino-6-(D-ribitylamino)uracil = 6,7-dimethyl-8-(1-D-ribityl)lumazine + phosphate + 2 H2O + H(+). It functions in the pathway cofactor biosynthesis; riboflavin biosynthesis; riboflavin from 2-hydroxy-3-oxobutyl phosphate and 5-amino-6-(D-ribitylamino)uracil: step 1/2. Its function is as follows. Catalyzes the formation of 6,7-dimethyl-8-ribityllumazine by condensation of 5-amino-6-(D-ribitylamino)uracil with 3,4-dihydroxy-2-butanone 4-phosphate. This is the penultimate step in the biosynthesis of riboflavin. This Chlorobium limicola (strain DSM 245 / NBRC 103803 / 6330) protein is 6,7-dimethyl-8-ribityllumazine synthase.